A 556-amino-acid chain; its full sequence is DNA ligase B (556 aa).

The N6-AMP-lysine intermediate role is filled by Lys124.

It belongs to the NAD-dependent DNA ligase family. LigB subfamily.

The catalysed reaction is NAD(+) + (deoxyribonucleotide)n-3'-hydroxyl + 5'-phospho-(deoxyribonucleotide)m = (deoxyribonucleotide)n+m + AMP + beta-nicotinamide D-nucleotide.. Catalyzes the formation of phosphodiester linkages between 5'-phosphoryl and 3'-hydroxyl groups in double-stranded DNA using NAD as a coenzyme and as the energy source for the reaction. This is DNA ligase B from Pseudomonas fluorescens (strain ATCC BAA-477 / NRRL B-23932 / Pf-5).